The sequence spans 531 residues: O-phosphoserine--tRNA(Cys) ligase (531 aa).

Residues 189–191, 234–236, 276–277, and N319 contribute to the substrate site; these read HMT, SAS, and YY.

This sequence belongs to the class-II aminoacyl-tRNA synthetase family. O-phosphoseryl-tRNA(Cys) synthetase subfamily. As to quaternary structure, homotetramer. Interacts with SepCysS.

It carries out the reaction tRNA(Cys) + O-phospho-L-serine + ATP = O-phospho-L-seryl-tRNA(Cys) + AMP + diphosphate. Functionally, catalyzes the attachment of O-phosphoserine (Sep) to tRNA(Cys). This is O-phosphoserine--tRNA(Cys) ligase from Methanospirillum hungatei JF-1 (strain ATCC 27890 / DSM 864 / NBRC 100397 / JF-1).